Reading from the N-terminus, the 116-residue chain is S-adenosylmethionine decarboxylase proenzyme (116 aa).

Ser62 (schiff-base intermediate with substrate; via pyruvic acid) is an active-site residue. Pyruvic acid (Ser); by autocatalysis is present on Ser62. His67 functions as the Proton acceptor; for processing activity in the catalytic mechanism. Cys82 (proton donor; for catalytic activity) is an active-site residue.

It belongs to the prokaryotic AdoMetDC family. Type 1 subfamily. Heterotetramer of two alpha and two beta chains arranged as a dimer of alpha/beta heterodimers. The cofactor is pyruvate. Is synthesized initially as an inactive proenzyme. Formation of the active enzyme involves a self-maturation process in which the active site pyruvoyl group is generated from an internal serine residue via an autocatalytic post-translational modification. Two non-identical subunits are generated from the proenzyme in this reaction, and the pyruvate is formed at the N-terminus of the alpha chain, which is derived from the carboxyl end of the proenzyme. The post-translation cleavage follows an unusual pathway, termed non-hydrolytic serinolysis, in which the side chain hydroxyl group of the serine supplies its oxygen atom to form the C-terminus of the beta chain, while the remainder of the serine residue undergoes an oxidative deamination to produce ammonia and the pyruvoyl group blocking the N-terminus of the alpha chain.

The enzyme catalyses S-adenosyl-L-methionine + H(+) = S-adenosyl 3-(methylsulfanyl)propylamine + CO2. It functions in the pathway amine and polyamine biosynthesis; S-adenosylmethioninamine biosynthesis; S-adenosylmethioninamine from S-adenosyl-L-methionine: step 1/1. Catalyzes the decarboxylation of S-adenosylmethionine to S-adenosylmethioninamine (dcAdoMet), the propylamine donor required for the synthesis of the polyamines spermine and spermidine from the diamine putrescine. This chain is S-adenosylmethionine decarboxylase proenzyme, found in Thermomicrobium roseum (strain ATCC 27502 / DSM 5159 / P-2).